We begin with the raw amino-acid sequence, 88 residues long: Large ribosomal subunit protein bL27 (88 aa).

Residues 1–21 are disordered; sequence MAHKKGASSSRNGRDSAAQRL.

This sequence belongs to the bacterial ribosomal protein bL27 family.

This Mycobacterium avium (strain 104) protein is Large ribosomal subunit protein bL27.